The following is a 267-amino-acid chain: uncharacterized protein (267 aa).

Positions 2 to 198 (LGANGAGKTT…FRNKFIVIEG (197 aa)) constitute an ABC transporter domain. 3 to 10 (GANGAGKT) is a binding site for ATP.

Belongs to the ABC transporter superfamily.

This is an uncharacterized protein from Alkalihalophilus pseudofirmus (strain ATCC BAA-2126 / JCM 17055 / OF4) (Bacillus pseudofirmus).